The following is a 259-amino-acid chain: Large ribosomal subunit protein eL8 (259 aa).

Positions 1-24 are disordered; sequence MAPKSKKVAPSPFAQPKAAKTTKN. 2 positions are modified to phosphoserine: S11 and S33.

This sequence belongs to the eukaryotic ribosomal protein eL8 family. As to quaternary structure, component of the large ribosomal subunit (LSU). Mature yeast ribosomes consist of a small (40S) and a large (60S) subunit. The 40S small subunit contains 1 molecule of ribosomal RNA (18S rRNA) and at least 33 different proteins. The large 60S subunit contains 3 rRNA molecules (25S, 5.8S and 5S rRNA) and at least 46 different proteins.

It localises to the cytoplasm. In terms of biological role, component of the ribosome, a large ribonucleoprotein complex responsible for the synthesis of proteins in the cell. The small ribosomal subunit (SSU) binds messenger RNAs (mRNAs) and translates the encoded message by selecting cognate aminoacyl-transfer RNA (tRNA) molecules. The large subunit (LSU) contains the ribosomal catalytic site termed the peptidyl transferase center (PTC), which catalyzes the formation of peptide bonds, thereby polymerizing the amino acids delivered by tRNAs into a polypeptide chain. The nascent polypeptides leave the ribosome through a tunnel in the LSU and interact with protein factors that function in enzymatic processing, targeting, and the membrane insertion of nascent chains at the exit of the ribosomal tunnel. The chain is Large ribosomal subunit protein eL8 (rpl8) from Schizosaccharomyces pombe (strain 972 / ATCC 24843) (Fission yeast).